Reading from the N-terminus, the 141-residue chain is Flagellar assembly factor FliW (141 aa).

It belongs to the FliW family. Interacts with translational regulator CsrA and flagellin(s).

Its subcellular location is the cytoplasm. Its function is as follows. Acts as an anti-CsrA protein, binds CsrA and prevents it from repressing translation of its target genes, one of which is flagellin. Binds to flagellin and participates in the assembly of the flagellum. The chain is Flagellar assembly factor FliW from Clostridium botulinum (strain Alaska E43 / Type E3).